The following is a 170-amino-acid chain: ATP synthase subunit b (170 aa).

Residues 11–31 (AFTFGDAFFTLFAFAILLVLI) traverse the membrane as a helical segment.

It belongs to the ATPase B chain family. In terms of assembly, F-type ATPases have 2 components, F(1) - the catalytic core - and F(0) - the membrane proton channel. F(1) has five subunits: alpha(3), beta(3), gamma(1), delta(1), epsilon(1). F(0) has three main subunits: a(1), b(2) and c(10-14). The alpha and beta chains form an alternating ring which encloses part of the gamma chain. F(1) is attached to F(0) by a central stalk formed by the gamma and epsilon chains, while a peripheral stalk is formed by the delta and b chains.

Its subcellular location is the cell membrane. Its function is as follows. F(1)F(0) ATP synthase produces ATP from ADP in the presence of a proton or sodium gradient. F-type ATPases consist of two structural domains, F(1) containing the extramembraneous catalytic core and F(0) containing the membrane proton channel, linked together by a central stalk and a peripheral stalk. During catalysis, ATP synthesis in the catalytic domain of F(1) is coupled via a rotary mechanism of the central stalk subunits to proton translocation. Functionally, component of the F(0) channel, it forms part of the peripheral stalk, linking F(1) to F(0). The sequence is that of ATP synthase subunit b from Listeria innocua serovar 6a (strain ATCC BAA-680 / CLIP 11262).